A 286-amino-acid polypeptide reads, in one-letter code: S-adenosylmethionine-dependent methyltransferase UmaA (286 aa).

S-adenosyl-L-methionine contacts are provided by residues 32-33 (YT), 67-75 (LLDIGCGWG), 93-98 (TLSRNQ), and 122-123 (WD). Cysteine 268 is an active-site residue.

The protein belongs to the CFA/CMAS family.

The protein resides in the cytoplasm. Methyltransferase that modifies short-chain fatty acids. In vitro, catalyzes the transfer of the methyl group from S-adenosyl-L-methionine (SAM) to the double bond of phospholipid-linked oleic acid to produce tuberculostearic acid (10-methylstearic-acid or TSA). The protein is S-adenosylmethionine-dependent methyltransferase UmaA of Mycobacterium tuberculosis (strain ATCC 25618 / H37Rv).